Here is a 1085-residue protein sequence, read N- to C-terminus: Activating transcription factor 7-interacting protein 1 (1085 aa).

Disordered stretches follow at residues 1–22, 47–109, 127–245, 329–381, 469–499, 517–560, 650–843, 889–910, and 932–975; these read MDNTDEPQKKVFKARKTMRASD, GKHE…VNVT, LGSN…NTDS, PNKS…VHSK, AAKEDMKKKQENTPNPSLSSGKAASSTANAN, RNVG…TSSP, ASTN…TTIH, NSVRGAVMPSPSLRPVNPQTGS, and GAPQ…ANTS. Residues 54 to 64 show a composition bias toward polar residues; sequence SDLNSPLSNTD. 2 stretches are compositionally biased toward basic and acidic residues: residues 82 to 91 and 133 to 150; these read SEIKRPESRA and NFHEENNIKNRLDQRESD. Polar residues-rich tracts occupy residues 151 to 165 and 173 to 182; these read TPSGENKSNCDNSFS and NDITIISNSP. 2 stretches are compositionally biased toward basic and acidic residues: residues 347–379 and 469–479; these read EREVVHKEEEKHTERGEVSRRKRSKSEDMDSVH and AAKEDMKKKQE. A coiled-coil region spans residues 446–480; it reads NKRHKTVLTELQAKITRLTKRFGAAKEDMKKKQEN. Low complexity-rich tracts occupy residues 487-499, 529-547, and 651-666; these read SSGKAASSTANAN, APVSAAPASSLAAPQTPAS, and STNTTKPNNSPSVSSP. Residues 667-717 are compositionally biased toward polar residues; sequence GVQRNSPASAGSVRTTLAVQAVSTTHPVAQTTRTSLPTVGTSGLHNSTSSR. A compositionally biased stretch (low complexity) spans 732–743; the sequence is TAPTEPPTITAP. Composition is skewed to polar residues over residues 746-775, 792-810, and 830-843; these read ENQTSRPPTDSSANKRTAEGPTQSVKVTGS, SSQAEAKKQNQTASTAQSI, and TGVPTSGPSQTTIH. The segment covering 950-968 has biased composition (pro residues); that stretch reads PRPVHPAPLPEAPQPPRLP. In terms of domain architecture, Fibronectin type-III spans 976–1082; it reads LPQKPQLKLA…DPQSTDVISS (107 aa).

The protein belongs to the MCAF family.

The protein localises to the nucleus. Its function is as follows. Recruiter that couples transcriptional factors to general transcription apparatus and thereby modulates transcription regulation and chromatin formation. Can both act as an activator or a repressor depending on the context. Mediates MBD1-dependent transcriptional repression, probably by recruiting complexes containing histone methyltransferase activity. May belong to a complex that represses transcription and couples DNA methylation and histone H3 'Lys-9' trimethylation (H3K9me3). This is Activating transcription factor 7-interacting protein 1 (ATF7IP) from Gallus gallus (Chicken).